Reading from the N-terminus, the 138-residue chain is Putative pre-16S rRNA nuclease (138 aa).

It belongs to the YqgF nuclease family.

The protein localises to the cytoplasm. In terms of biological role, could be a nuclease involved in processing of the 5'-end of pre-16S rRNA. This Bacillus pumilus (strain SAFR-032) protein is Putative pre-16S rRNA nuclease.